We begin with the raw amino-acid sequence, 317 residues long: MSQALMNTAAATAETDAAMSFKQNEKIVYENNKLHKRLCRQVGQAIGDFNMIEDGDKVMVCLSGGKDSYALLDILMTLRERAPIKFDIVAVNLDQKQPNFPDHILPAYLKQLDIPFHIENQDTYSIVKRLIPEGKTTCSLCSRLRRGILYRVADELGANKIALGHHRDDIMETFFLNMFFGAKIKGMPPKLQSDDGKHIVIRPLAYVKEADTERYAEVKNFPIIPCDLCGSQENLQRKQIKGMLREWEKKFPGRVDNIFSSLSTVVPSHLMDKELFGFADLKATGEAMANGDIAFDEEPCSTGSTSIPGIIPLRADD.

A PP-loop motif motif is present at residues 63-68 (SGGKDS). [4Fe-4S] cluster is bound by residues Cys-138, Cys-141, and Cys-229.

Belongs to the TtcA family. As to quaternary structure, homodimer. It depends on Mg(2+) as a cofactor. [4Fe-4S] cluster serves as cofactor.

The protein resides in the cytoplasm. The catalysed reaction is cytidine(32) in tRNA + S-sulfanyl-L-cysteinyl-[cysteine desulfurase] + AH2 + ATP = 2-thiocytidine(32) in tRNA + L-cysteinyl-[cysteine desulfurase] + A + AMP + diphosphate + H(+). It participates in tRNA modification. Its function is as follows. Catalyzes the ATP-dependent 2-thiolation of cytidine in position 32 of tRNA, to form 2-thiocytidine (s(2)C32). The sulfur atoms are provided by the cysteine/cysteine desulfurase (IscS) system. This is tRNA-cytidine(32) 2-sulfurtransferase from Janthinobacterium sp. (strain Marseille) (Minibacterium massiliensis).